The sequence spans 837 residues: Telomere length regulation protein TEL2 homolog (837 aa).

Met1 carries the N-acetylmethionine modification. Hydroxyproline occurs at positions 374, 419, and 422. Positions 444-472 (QPAGDGASEAGTSLVPATAEPPAETPAEI) are disordered. Ser456 bears the Phosphoserine mark. The span at 459-471 (PATAEPPAETPAE) shows a compositional bias: low complexity. Ser485 carries the post-translational modification Phosphoserine; by CK2. Residues Ser487 and Ser491 each carry the phosphoserine modification. Residues 627–651 (GCLGRTPQPGSPSPNTPCLPEAAVS) are disordered. Phosphoserine is present on residues Ser688 and Ser836.

Belongs to the TEL2 family. In terms of assembly, component of the TTT complex composed of TELO2, TTI1 and TTI2. Interacts with ATM, ATR, MTOR, PRKDC, RUVBL2, TTI1, TTI2, SMG1 and TRRAP. Component of the mTORC1 and mTORC2 complexes. Interacts (phosphorylated form) with PIH1D1 which mediates interaction of TELO2 with the R2TP complex composed of RUVBL1, RUVBL2, PIH1D1, and RPAP3. In terms of processing, hydroxylation by PHD3 is required for a proper interaction with ATR, and activation of the ATR/CHK1/p53 pathway following DNA damage. Phosphorylated at Ser-485 by CK2 following growth factor deprivation, leading to its subsequent ubiquitination by the SCF(FBXO9) complex. Phosphorylation by CK2 only takes place when TELO2 is bound to mTORC1, not mTORC2; leading to selective ubiquitination of mTORC1-associated protein. Post-translationally, ubiquitinated by the SCF(FBXO9) complex following phosphorylation by CK2 in response to growth factor deprivation, leading to its degradation by the proteasome. Only mTORC1-associated protein is ubiquitinated and degraded, leading to selective inactivation of mTORC1 to restrain cell growth and protein translation, while mTORC2 is activated due to the relief of feedback inhibition by mTORC1.

The protein resides in the cytoplasm. It is found in the membrane. Its subcellular location is the nucleus. The protein localises to the chromosome. It localises to the telomere. Regulator of the DNA damage response (DDR). Part of the TTT complex that is required to stabilize protein levels of the phosphatidylinositol 3-kinase-related protein kinase (PIKK) family proteins. The TTT complex is involved in the cellular resistance to DNA damage stresses, like ionizing radiation (IR), ultraviolet (UV) and mitomycin C (MMC). Together with the TTT complex and HSP90 may participate in the proper folding of newly synthesized PIKKs. Promotes assembly, stabilizes and maintains the activity of mTORC1 and mTORC2 complexes, which regulate cell growth and survival in response to nutrient and hormonal signals. May be involved in telomere length regulation. The sequence is that of Telomere length regulation protein TEL2 homolog (TELO2) from Homo sapiens (Human).